The sequence spans 859 residues: Leucine--tRNA ligase (859 aa).

Residues 42–52 (PYPSGRLHMGH) carry the 'HIGH' region motif. The short motif at 618 to 622 (KMSKS) is the 'KMSKS' region element. An ATP-binding site is contributed by lysine 621.

This sequence belongs to the class-I aminoacyl-tRNA synthetase family.

Its subcellular location is the cytoplasm. The enzyme catalyses tRNA(Leu) + L-leucine + ATP = L-leucyl-tRNA(Leu) + AMP + diphosphate. The sequence is that of Leucine--tRNA ligase from Shewanella amazonensis (strain ATCC BAA-1098 / SB2B).